Here is a 375-residue protein sequence, read N- to C-terminus: 23S rRNA (uracil(747)-C(5))-methyltransferase RlmC (375 aa).

C3, C11, C14, and C87 together coordinate [4Fe-4S] cluster. S-adenosyl-L-methionine contacts are provided by Q212, F241, E262, and N307. Residue C334 is the Nucleophile of the active site.

This sequence belongs to the class I-like SAM-binding methyltransferase superfamily. RNA M5U methyltransferase family. RlmC subfamily.

The catalysed reaction is uridine(747) in 23S rRNA + S-adenosyl-L-methionine = 5-methyluridine(747) in 23S rRNA + S-adenosyl-L-homocysteine + H(+). In terms of biological role, catalyzes the formation of 5-methyl-uridine at position 747 (m5U747) in 23S rRNA. The polypeptide is 23S rRNA (uracil(747)-C(5))-methyltransferase RlmC (Cronobacter sakazakii (strain ATCC BAA-894) (Enterobacter sakazakii)).